The following is a 610-amino-acid chain: tRNA uridine 5-carboxymethylaminomethyl modification enzyme MnmG (610 aa).

14–19 provides a ligand contact to FAD; the sequence is GAGHAG. 274–288 lines the NAD(+) pocket; it reads GPRYCPSIEDKIVKF.

Belongs to the MnmG family. Homodimer. Heterotetramer of two MnmE and two MnmG subunits. FAD is required as a cofactor.

The protein resides in the cytoplasm. NAD-binding protein involved in the addition of a carboxymethylaminomethyl (cmnm) group at the wobble position (U34) of certain tRNAs, forming tRNA-cmnm(5)s(2)U34. The sequence is that of tRNA uridine 5-carboxymethylaminomethyl modification enzyme MnmG from Chlamydia muridarum (strain MoPn / Nigg).